A 211-amino-acid polypeptide reads, in one-letter code: Interleukin-6 (211 aa).

The N-terminal stretch at 1 to 24 (MKFLSARDFHPVAFLGLMLVTTTA) is a signal peptide. 2 cysteine pairs are disulfide-bonded: Cys70–Cys76 and Cys99–Cys109.

Belongs to the IL-6 superfamily. As to quaternary structure, component of a hexamer of two molecules each of IL6, IL6R and IL6ST; first binds to IL6R to associate with the signaling subunit IL6ST. Interacts with IL6R (via the N-terminal ectodomain); this interaction may be affected by IL6R-binding with SORL1, hence decreasing IL6 cis signaling. Interacts with SORL1 (via the N-terminal ectodomain); this interaction leads to IL6 internalization and lysosomal degradation. May form a trimeric complex with the soluble SORL1 ectodomain and soluble IL6R receptor; this interaction might stabilize circulating IL6, hence promoting IL6 trans signaling. N- and O-glycosylated. As to expression, expressed by dendritic cells and macrophages. Expressed by activated follicular B cells. Abundantly expressed in the central nervous system (CNS), particularly the hypothalamic region.

It localises to the secreted. Its function is as follows. Cytokine with a wide variety of biological functions in immunity, tissue regeneration, and metabolism. Binds to IL6R, then the complex associates to the signaling subunit IL6ST/gp130 to trigger the intracellular IL6-signaling pathway. The interaction with the membrane-bound IL6R and IL6ST stimulates 'classic signaling', whereas the binding of IL6 and soluble IL6R to IL6ST stimulates 'trans-signaling'. Alternatively, 'cluster signaling' occurs when membrane-bound IL6:IL6R complexes on transmitter cells activate IL6ST receptors on neighboring receiver cells. IL6 is a potent inducer of the acute phase response. Rapid production of IL6 contributes to host defense during infection and tissue injury, but excessive IL6 synthesis is involved in disease pathology. In the innate immune response, is synthesized by myeloid cells, such as macrophages and dendritic cells, upon recognition of pathogens through toll-like receptors (TLRs) at the site of infection or tissue injury. In the adaptive immune response, is required for the differentiation of B-cells into immunoglolin-secreting cells. Plays a major role in the differentiation of CD4(+) T cell subsets. Essential factor for the development of T follicular helper (Tfh) cells that are required for the induction of germinal-center formation. Together with IL21, controls the early generation of Tfh cells and are critical for an effective antibody response to acute viral infection. Required to drive naive CD4(+) T cells to the Th17 lineage, through 'cluster signaling' by dendritic cells. Also required for proliferation of myeloma cells and the survival of plasmablast cells. Functionally, acts as an essential factor in bone homeostasis and on vessels directly or indirectly by induction of VEGF, resulting in increased angiogenesis activity and vascular permeability. Induces, through 'trans-signaling' and synergistically with IL1B and TNF, the production of VEGF. Involved in metabolic controls, is discharged into the bloodstream after muscle contraction increasing lipolysis and improving insulin resistance. 'Trans-signaling' in central nervous system regulates energy and glucose homeostasis. Mediates, through GLP-1, crosstalk between insulin-sensitive tissues, intestinal L cells and pancreatic islets to adapt to changes in insulin demand. Also acts as a myokine. Plays a protective role during liver injury, being required for maintenance of tissue regeneration. Also has a pivotal role in iron metabolism by regulating HAMP/hepcidin expression upon inflammation or bacterial infection. Through activation of IL6ST-YAP-NOTCH pathway, induces inflammation-induced epithelial regeneration. The protein is Interleukin-6 of Mus musculus (Mouse).